Reading from the N-terminus, the 518-residue chain is Transcription factor TT8 (518 aa).

Coiled-coil stretches lie at residues 220 to 240 (EVHE…MSEE) and 405 to 428 (VNHL…KRTR). Residues 359-408 (REDLSHVVAERRRREKLNEKFITLRSMVPFVTKMDKVSILGDTIAYVNHL) form the bHLH domain.

The protein belongs to the bHLH protein family. In terms of assembly, homodimer. Interacts with MYB4, MYB5, MYB6, MYB82, MYB113, MYB114, MYB75/PAP1, MYB90/PAP2, and TT2. Buds, flowers and developing siliques, but not in leaves, stems and roots.

It localises to the nucleus. Its function is as follows. Transcription activator, when associated with MYB75/PAP1 or MYB90/PAP2. Involved in the control of flavonoid pigmentation. Plays a key role in regulating leucoanthocyanidin reductase (BANYULS) and dihydroflavonol-4-reductase (DFR). Not required for leucoanthocyanidin dioxygenase (LDOX) expression. The chain is Transcription factor TT8 from Arabidopsis thaliana (Mouse-ear cress).